A 546-amino-acid polypeptide reads, in one-letter code: Chaperonin GroEL (546 aa).

ATP contacts are provided by residues 30–33, lysine 51, 87–91, glycine 415, 479–481, and aspartate 495; these read TLGP, DGTTT, and NAA. Residues 526-546 are disordered; sequence KKDEPAMPAGGGMGGMGGMDF. Residues 534–546 are compositionally biased toward gly residues; the sequence is AGGGMGGMGGMDF.

This sequence belongs to the chaperonin (HSP60) family. As to quaternary structure, forms a cylinder of 14 subunits composed of two heptameric rings stacked back-to-back. Interacts with the co-chaperonin GroES.

The protein localises to the cytoplasm. It catalyses the reaction ATP + H2O + a folded polypeptide = ADP + phosphate + an unfolded polypeptide.. Its function is as follows. Together with its co-chaperonin GroES, plays an essential role in assisting protein folding. The GroEL-GroES system forms a nano-cage that allows encapsulation of the non-native substrate proteins and provides a physical environment optimized to promote and accelerate protein folding. The chain is Chaperonin GroEL from Xanthomonas campestris pv. campestris (strain 8004).